Reading from the N-terminus, the 435-residue chain is Methionine aminopeptidase 2 (435 aa).

The disordered stretch occupies residues 1–87 (MAAQVADGVA…TQTKPPRVPV (87 aa)). Basic and acidic residues predominate over residues 10 to 19 (ADLKLDDTKS). Residues 20-29 (KPTNGTTQNG) show a composition bias toward polar residues. The segment covering 32–46 (EHEDSDDDNEGEEGA) has biased composition (acidic residues). Positions 55 to 68 (KKKKKRKPRKKKKA) are enriched in basic residues. H199 lines the substrate pocket. A divalent metal cation-binding residues include D219, D230, and H299. H307 lines the substrate pocket. Positions 332 and 427 each coordinate a divalent metal cation.

The protein belongs to the peptidase M24A family. Methionine aminopeptidase eukaryotic type 2 subfamily. Requires Co(2+) as cofactor. Zn(2+) is required as a cofactor. Mn(2+) serves as cofactor. The cofactor is Fe(2+).

The protein localises to the cytoplasm. It carries out the reaction Release of N-terminal amino acids, preferentially methionine, from peptides and arylamides.. Its function is as follows. Cotranslationally removes the N-terminal methionine from nascent proteins. The N-terminal methionine is often cleaved when the second residue in the primary sequence is small and uncharged (Met-Ala-, Cys, Gly, Pro, Ser, Thr, or Val). The chain is Methionine aminopeptidase 2 from Phaeosphaeria nodorum (strain SN15 / ATCC MYA-4574 / FGSC 10173) (Glume blotch fungus).